Consider the following 127-residue polypeptide: Ribosome-binding factor A (127 aa).

Belongs to the RbfA family. As to quaternary structure, monomer. Binds 30S ribosomal subunits, but not 50S ribosomal subunits or 70S ribosomes.

Its subcellular location is the cytoplasm. One of several proteins that assist in the late maturation steps of the functional core of the 30S ribosomal subunit. Associates with free 30S ribosomal subunits (but not with 30S subunits that are part of 70S ribosomes or polysomes). Required for efficient processing of 16S rRNA. May interact with the 5'-terminal helix region of 16S rRNA. This is Ribosome-binding factor A from Glaesserella parasuis serovar 5 (strain SH0165) (Haemophilus parasuis).